The primary structure comprises 235 residues: Glutathione S-transferase 1 (235 aa).

Residues 36–113 (EKYTLTYFNG…LLGGRFGLLG (78 aa)) form the GST N-terminal domain. Residues tyrosine 42, tryptophan 73, lysine 77, valine 85, and 97-98 (ES) contribute to the glutathione site. Positions 115 to 235 (NDWEEAKIMA…WIKKRPKTYF (121 aa)) constitute a GST C-terminal domain.

Belongs to the GST superfamily. Homodimer.

It carries out the reaction RX + glutathione = an S-substituted glutathione + a halide anion + H(+). This chain is Glutathione S-transferase 1 (GST1), found in Onchocerca volvulus.